Reading from the N-terminus, the 165-residue chain is UPF0303 protein Bcenmc03_1534 (165 aa).

The protein belongs to the UPF0303 family.

This is UPF0303 protein Bcenmc03_1534 from Burkholderia orbicola (strain MC0-3).